The primary structure comprises 127 residues: Probable 4-amino-4-deoxy-L-arabinose-phosphoundecaprenol flippase subunit ArnF (127 aa).

Residues 1–21 (MMGYFWALMSVLLVSGAQLMM) form a helical membrane-spanning segment. Over 22–48 (KWAMVSLPPVGQTDALMSAFMSVTPGA) the chain is Periplasmic. Residues 49 to 69 (VALVIGLFAYVFSMGCWYMAL) form a helical membrane-spanning segment. Residues 70–77 (RRIALSKA) are Cytoplasmic-facing. A helical transmembrane segment spans residues 78–98 (YPLLSLSYVLVWAAAIGLPWL). The Periplasmic portion of the chain corresponds to 99-101 (HEP). Residues 102–122 (FSVGKLAGVSVIFVGLLLVCL) traverse the membrane as a helical segment. Topologically, residues 123–127 (PDKKS) are cytoplasmic.

This sequence belongs to the ArnF family. As to quaternary structure, heterodimer of ArnE and ArnF.

It is found in the cell inner membrane. Its pathway is bacterial outer membrane biogenesis; lipopolysaccharide biosynthesis. Its function is as follows. Translocates 4-amino-4-deoxy-L-arabinose-phosphoundecaprenol (alpha-L-Ara4N-phosphoundecaprenol) from the cytoplasmic to the periplasmic side of the inner membrane. The polypeptide is Probable 4-amino-4-deoxy-L-arabinose-phosphoundecaprenol flippase subunit ArnF (Enterobacter sp. (strain 638)).